The sequence spans 313 residues: Protein FixB (313 aa).

255 to 283 is a binding site for FAD; it reads LYLAVGISGQIQHMVGANASQTIFAINKD.

The protein belongs to the ETF alpha-subunit/FixB family. In terms of assembly, heterodimer of FixA and FixB.

It functions in the pathway amine and polyamine metabolism; carnitine metabolism. Functionally, required for anaerobic carnitine reduction. May bring reductant to CaiA. This is Protein FixB from Escherichia coli (strain K12 / MC4100 / BW2952).